Consider the following 357-residue polypeptide: Phospho-N-acetylmuramoyl-pentapeptide-transferase (357 aa).

10 helical membrane-spanning segments follow: residues 23-43 (AIFS…YFIY), 70-90 (TMGG…YCNL), 91-111 (SNIY…IGFI), 127-147 (LKWK…MIKI), 171-191 (YLYI…VNLT), 196-216 (GLAI…SLFS), 236-256 (LAIL…FNSY), 260-280 (VFMG…IAIL), 286-306 (LLII…LQII), and 334-354 (LIIV…LISL).

Belongs to the glycosyltransferase 4 family. MraY subfamily. Mg(2+) is required as a cofactor.

Its subcellular location is the cell inner membrane. It carries out the reaction UDP-N-acetyl-alpha-D-muramoyl-L-alanyl-gamma-D-glutamyl-meso-2,6-diaminopimeloyl-D-alanyl-D-alanine + di-trans,octa-cis-undecaprenyl phosphate = di-trans,octa-cis-undecaprenyl diphospho-N-acetyl-alpha-D-muramoyl-L-alanyl-D-glutamyl-meso-2,6-diaminopimeloyl-D-alanyl-D-alanine + UMP. Its pathway is cell wall biogenesis; peptidoglycan biosynthesis. Catalyzes the initial step of the lipid cycle reactions in the biosynthesis of the cell wall peptidoglycan: transfers peptidoglycan precursor phospho-MurNAc-pentapeptide from UDP-MurNAc-pentapeptide onto the lipid carrier undecaprenyl phosphate, yielding undecaprenyl-pyrophosphoryl-MurNAc-pentapeptide, known as lipid I. This chain is Phospho-N-acetylmuramoyl-pentapeptide-transferase, found in Buchnera aphidicola subsp. Acyrthosiphon pisum (strain 5A).